A 212-amino-acid chain; its full sequence is Protein DEPP1 (212 aa).

3 disordered regions span residues 20-39 (EEML…SLDD), 49-79 (QPTS…GRPA), and 113-176 (QEKQ…SDLR). A compositionally biased stretch (basic and acidic residues) spans 113-124 (QEKQPSQRDLPR).

In terms of tissue distribution, expressed in various tissues, including pancreas, placenta, ovary, testis and kidney.

The protein resides in the cytoplasm. Its subcellular location is the peroxisome. The protein localises to the mitochondrion. Acts as a critical modulator of FOXO3-induced autophagy via increased cellular ROS. This chain is Protein DEPP1, found in Homo sapiens (Human).